Here is a 508-residue protein sequence, read N- to C-terminus: MGLPWYRVHTVVLNDPGRLIAVHIMHTALVSGWAGSMALYELAVFDPSDPILDPMWRQGMFVIPFMTRLGIKDSWGGWSITGETGSNPGIWSYEGVAGAHIVFSGLCFLAAIWHWVYWDLDVFCDSRTGKPSLDLPKIFGIHLFLSGAACFGFGAFHVTGLYGPGIWVSDPYGLTGKIQPVNPAWGAEGFDPFVPGGIASHHIAAGILGILAGLFHLSVRPPQRLYKGLRMGNIETVLSSSIAAVFFAAFIVAGTMWYGSATTPIELFGPTRYQWDQGYFQQEIDRRVRAGLAENLSLSEAWSKIPEKLAFYDYIGNNPAKGGLFRAGAMDNGDGIAVGWLGHPIFKDKNGHELFVRRMPTFFETFPVVLVDEEGIVKADVPFRRAESKYSVEQVGVTVEFYGGELDGVSFGDPAIVKKYARRAQLGEIFELDRATLKSDGVFRSSPRGWFTFGHATFALLFFFGHIWHGARTLFRDVFAGIDPDLDAQVEFGAFQKLGDPTTKRQVV.

Transmembrane regions (helical) follow at residues 21 to 36, 101 to 115, 140 to 156, 203 to 218, 237 to 252, and 457 to 472; these read AVHI…WAGS, IVFS…IWHW, GIHL…FGAF, IAAG…FHLS, VLSS…AFIV, and TFAL…HGAR.

The protein belongs to the PsbB/PsbC family. PsbB subfamily. In terms of assembly, PSII is composed of 1 copy each of membrane proteins PsbA, PsbB, PsbC, PsbD, PsbE, PsbF, PsbH, PsbI, PsbJ, PsbK, PsbL, PsbM, PsbT, PsbX, PsbY, PsbZ, Psb30/Ycf12, at least 3 peripheral proteins of the oxygen-evolving complex and a large number of cofactors. It forms dimeric complexes. Requires Binds multiple chlorophylls. PSII binds additional chlorophylls, carotenoids and specific lipids. as cofactor.

The protein localises to the plastid. The protein resides in the chloroplast thylakoid membrane. Functionally, one of the components of the core complex of photosystem II (PSII). It binds chlorophyll and helps catalyze the primary light-induced photochemical processes of PSII. PSII is a light-driven water:plastoquinone oxidoreductase, using light energy to abstract electrons from H(2)O, generating O(2) and a proton gradient subsequently used for ATP formation. The chain is Photosystem II CP47 reaction center protein from Cryptomeria japonica (Japanese cedar).